A 123-amino-acid chain; its full sequence is Ig heavy chain V region H8 (123 aa).

In terms of domain architecture, Ig-like spans 1-114 (EVKLVESGGG…BSYWYFDVWG (114 aa)).

The chain is Ig heavy chain V region H8 from Mus musculus (Mouse).